Reading from the N-terminus, the 248-residue chain is ATP synthase delta chain, chloroplastic (248 aa).

A chloroplast-targeting transit peptide spans 1-60; the sequence is MAALQQTPITFQSRSPPPTQIISGPTAKLSFSGGLKLPKLTIKLRSNRTSRRGGGAAGSK.

Belongs to the ATPase delta chain family. In terms of assembly, F-type ATPases have 2 components, CF(1) - the catalytic core - and CF(0) - the membrane proton channel. CF(1) has five subunits: alpha(3), beta(3), gamma(1), delta(1), epsilon(1). CF(0) has three main subunits: a, b and c.

The protein localises to the plastid. It is found in the chloroplast thylakoid membrane. In terms of biological role, this protein seems to be part of the stalk that links CF(0) to CF(1). It either transmits conformational changes from CF(0) into CF(1) or is implicated in proton conduction. The chain is ATP synthase delta chain, chloroplastic (ATPD) from Nicotiana tabacum (Common tobacco).